Reading from the N-terminus, the 677-residue chain is Methionine--tRNA ligase (677 aa).

The 'HIGH' region motif lies at 15–25 (PYANGSIHLGH). 4 residues coordinate Zn(2+): Cys-146, Cys-149, Cys-159, and Cys-162. A 'KMSKS' region motif is present at residues 333–337 (KMSKS). Lys-336 contributes to the ATP binding site. The tRNA-binding domain occupies 575–677 (DFAKIDLRVA…DGAKPGQQVK (103 aa)).

The protein belongs to the class-I aminoacyl-tRNA synthetase family. MetG type 1 subfamily. In terms of assembly, homodimer. Zn(2+) is required as a cofactor.

The protein resides in the cytoplasm. The enzyme catalyses tRNA(Met) + L-methionine + ATP = L-methionyl-tRNA(Met) + AMP + diphosphate. Functionally, is required not only for elongation of protein synthesis but also for the initiation of all mRNA translation through initiator tRNA(fMet) aminoacylation. This Salmonella agona (strain SL483) protein is Methionine--tRNA ligase.